We begin with the raw amino-acid sequence, 171 residues long: Laminin subunit beta-1 (171 aa).

Residues 1-29 (MNGRTQNLWFSTFRLVIVYALFFAKLCFG) form the signal peptide. Intrachain disulfides connect C59/C69, C72/C81, C84/C100, C103/C118, and C105/C128. Laminin EGF-like domains are found at residues 66–102 (TGVC…VCQR), 103–160 (CQCP…TCKK), and 161–171 (CLCNGNINSAS). N130 is a glycosylation site (N-linked (GlcNAc...) asparagine). 2 disulfide bridges follow: C131/C140 and C143/C158.

Laminin is a complex glycoprotein, consisting of three different polypeptide chains (alpha, beta, gamma), which are bound to each other by disulfide bonds into a cross-shaped molecule comprising one long and three short arms with globules at each end.

The protein resides in the secreted. It localises to the extracellular space. Its subcellular location is the extracellular matrix. The protein localises to the basement membrane. Binding to cells via a high affinity receptor, laminin is thought to mediate the attachment, migration and organization of cells into tissues during embryonic development by interacting with other extracellular matrix components. The protein is Laminin subunit beta-1 of Hydra vulgaris (Hydra).